The following is a 123-amino-acid chain: Small ribosomal subunit protein uS13 (123 aa).

Residues 95–123 form a disordered region; the sequence is GLPVRGQKTKTNARTRKGPKKAVASKKKK.

The protein belongs to the universal ribosomal protein uS13 family. Part of the 30S ribosomal subunit. Forms a loose heterodimer with protein S19. Forms two bridges to the 50S subunit in the 70S ribosome.

Functionally, located at the top of the head of the 30S subunit, it contacts several helices of the 16S rRNA. In the 70S ribosome it contacts the 23S rRNA (bridge B1a) and protein L5 of the 50S subunit (bridge B1b), connecting the 2 subunits; these bridges are implicated in subunit movement. Contacts the tRNAs in the A and P-sites. The polypeptide is Small ribosomal subunit protein uS13 (Clostridium acetobutylicum (strain ATCC 824 / DSM 792 / JCM 1419 / IAM 19013 / LMG 5710 / NBRC 13948 / NRRL B-527 / VKM B-1787 / 2291 / W)).